A 42-amino-acid polypeptide reads, in one-letter code: Large ribosomal subunit protein bL36 (42 aa).

This sequence belongs to the bacterial ribosomal protein bL36 family.

In Ehrlichia chaffeensis (strain ATCC CRL-10679 / Arkansas), this protein is Large ribosomal subunit protein bL36.